Reading from the N-terminus, the 236-residue chain is Methylosome subunit pICln (236 aa).

The disordered stretch occupies residues 1 to 20; that stretch reads MSFLKSFPPPGPTEGLRHQQ. An N-acetylserine modification is found at Ser2. 6 positions are modified to phosphoserine: Ser101, Ser143, Ser192, Ser194, Ser197, and Ser209. Residue Thr222 is modified to Phosphothreonine.

This sequence belongs to the pICln (TC 1.A.47) family. As to quaternary structure, component of the methylosome, a 20S complex containing at least PRMT5/SKB1, WDR77/MEP50 and CLNS1A/pICln. May mediate SNRPD1 and SNRPD3 methylation. Forms a 6S pICln-Sm complex composed of CLNS1A/pICln, SNRPD1, SNRPD2, SNRPE, SNRPF and SNRPG; ring-like structure where CLNS1A/pICln mimics additional Sm proteins and which is unable to assemble into the core snRNP. Interacts with LSM10 and LSM11. In terms of tissue distribution, widely distributed but expressed more abundantly in nonpigmented ciliary epithelial cells than in pigmented ones.

The protein localises to the cytoplasm. Its subcellular location is the cytosol. It is found in the nucleus. It localises to the cytoskeleton. Its function is as follows. Involved in both the assembly of spliceosomal snRNPs and the methylation of Sm proteins. Chaperone that regulates the assembly of spliceosomal U1, U2, U4 and U5 small nuclear ribonucleoproteins (snRNPs), the building blocks of the spliceosome, and thereby plays an important role in the splicing of cellular pre-mRNAs. Most spliceosomal snRNPs contain a common set of Sm proteins SNRPB, SNRPD1, SNRPD2, SNRPD3, SNRPE, SNRPF and SNRPG that assemble in a heptameric protein ring on the Sm site of the small nuclear RNA to form the core snRNP (Sm core). In the cytosol, the Sm proteins SNRPD1, SNRPD2, SNRPE, SNRPF and SNRPG are trapped in an inactive 6S pICln-Sm complex by the chaperone CLNS1A that controls the assembly of the core snRNP. Dissociation by the SMN complex of CLNS1A from the trapped Sm proteins and their transfer to an SMN-Sm complex triggers the assembly of core snRNPs and their transport to the nucleus. This chain is Methylosome subunit pICln (CLNS1A), found in Oryctolagus cuniculus (Rabbit).